Here is a 206-residue protein sequence, read N- to C-terminus: MKLDITTLDGGSAGSVELNEAIYGLEPRADILQRMVRYQLAKRRAGTHAVKNRSDVDRTSKKLYKQKGTGNARHGAASAPQFRGGGRAFGPVVRDHSHDLPKKVRALALKHALSAKAKASTLIVVDDIKVDNHKTKAMIERFEKLGLSSALIIGGSEVDENFGRAARAIPKIDVLPVQGINVYDILRRDTLVLTRAAVDALEERFK.

The protein belongs to the universal ribosomal protein uL4 family. Part of the 50S ribosomal subunit.

One of the primary rRNA binding proteins, this protein initially binds near the 5'-end of the 23S rRNA. It is important during the early stages of 50S assembly. It makes multiple contacts with different domains of the 23S rRNA in the assembled 50S subunit and ribosome. Its function is as follows. Forms part of the polypeptide exit tunnel. In Methylorubrum extorquens (strain CM4 / NCIMB 13688) (Methylobacterium extorquens), this protein is Large ribosomal subunit protein uL4.